A 2230-amino-acid polypeptide reads, in one-letter code: DNA polymerase epsilon catalytic subunit A (2230 aa).

A compositionally biased stretch (polar residues) spans 1-19 (MPTRQPSKYGNKFRSSSAS). The interval 1–24 (MPTRQPSKYGNKFRSSSASFKPKR) is disordered. Residues C2101, C2104, C2136, and C2139 each contribute to the Zn(2+) site. The CysA-type zinc finger occupies 2101 to 2139 (CNACCLIRDLDLCRDEDVLPEMGSDPNKAAPKPWRCPFC). Residues C2170, C2173, C2185, and C2187 each contribute to the [4Fe-4S] cluster site. The CysB motif signature appears at 2170–2187 (CSKCGGLKISDFMEHCSC).

It belongs to the DNA polymerase type-B family. Heterotetramer. Consists of 4 subunits: pol2, dpb2, dpb3 and dpb4. Requires [4Fe-4S] cluster as cofactor.

The protein localises to the nucleus. The catalysed reaction is DNA(n) + a 2'-deoxyribonucleoside 5'-triphosphate = DNA(n+1) + diphosphate. Functionally, DNA polymerase II participates in chromosomal DNA replication. This Aspergillus fumigatus (strain ATCC MYA-4609 / CBS 101355 / FGSC A1100 / Af293) (Neosartorya fumigata) protein is DNA polymerase epsilon catalytic subunit A (pol2).